An 856-amino-acid chain; its full sequence is Inactive rhomboid protein 1 (856 aa).

The tract at residues Met-1–Leu-20 is disordered. Topologically, residues Met-1–Thr-412 are cytoplasmic. Ser-76 and Ser-176 each carry phosphoserine. 2 positions are modified to phosphothreonine: Thr-180 and Thr-183. Ser-391 is subject to Phosphoserine. The helical transmembrane segment at Phe-413 to Phe-433 threads the bilayer. The Lumenal portion of the chain corresponds to Ser-434–Arg-656. The N-linked (GlcNAc...) asparagine glycan is linked to Asn-584. A helical membrane pass occupies residues Leu-657–Gln-677. The Cytoplasmic portion of the chain corresponds to Met-678 to Arg-692. A helical transmembrane segment spans residues Ile-693–Pro-713. Residues Tyr-714 to Arg-715 lie on the Lumenal side of the membrane. Residues Ala-716–Phe-736 traverse the membrane as a helical segment. Residues Gln-737–Arg-747 are Cytoplasmic-facing. The helical transmembrane segment at Ala-748 to Ile-768 threads the bilayer. Over Asp-769 to His-773 the chain is Lumenal. Residues Ile-774–Gly-794 traverse the membrane as a helical segment. Over Lys-795–Gln-804 the chain is Cytoplasmic. Residues Ile-805–Phe-825 form a helical membrane-spanning segment. Residues Tyr-826–His-856 are Lumenal-facing.

It belongs to the peptidase S54 family. In terms of assembly, homodimer, or homooligomer. Interacts with TGFA and HBEGF. Interacts with EGF; may retain EGF in the endoplasmic reticulum and regulates its degradation through the endoplasmic reticulum-associated degradation (ERAD). Interacts (via cytoplasmic N-terminus) with FRMD8/iTAP; this interaction leads to mutual protein stabilization. Interacts with ADAM17/TACE.

It is found in the endoplasmic reticulum membrane. It localises to the golgi apparatus membrane. Its function is as follows. Regulates ADAM17 protease, a sheddase of the epidermal growth factor (EGF) receptor ligands and TNF, thereby plays a role in sleep, cell survival, proliferation, migration and inflammation. Does not exhibit any protease activity on its own. The polypeptide is Inactive rhomboid protein 1 (Rhbdf1) (Rattus norvegicus (Rat)).